Consider the following 207-residue polypeptide: Large ribosomal subunit protein uL4 (207 aa).

A disordered region spans residues 49–78 (HAVKNRSAVSGGGRKPWRQKGTGRARQGSI).

This sequence belongs to the universal ribosomal protein uL4 family. In terms of assembly, part of the 50S ribosomal subunit.

Functionally, one of the primary rRNA binding proteins, this protein initially binds near the 5'-end of the 23S rRNA. It is important during the early stages of 50S assembly. It makes multiple contacts with different domains of the 23S rRNA in the assembled 50S subunit and ribosome. Its function is as follows. Forms part of the polypeptide exit tunnel. This chain is Large ribosomal subunit protein uL4, found in Streptococcus thermophilus (strain CNRZ 1066).